Here is a 209-residue protein sequence, read N- to C-terminus: rRNA N(6)-adenosine-methyltransferase METTL5 (209 aa).

S-adenosyl-L-methionine contacts are provided by residues Gln-28, Thr-31, Gly-59, Cys-62, Val-64, Asp-81, and 108–109 (DV).

Belongs to the methyltransferase superfamily. PrmA family. As to quaternary structure, heterodimer; heterodimerizes with TRMT112. As to expression, ubiquitously expressed in brain.

It is found in the nucleus. The protein localises to the presynapse. It localises to the postsynapse. It carries out the reaction adenosine(1832) in 18S rRNA + S-adenosyl-L-methionine = N(6)-methyladenosine(1832) in 18S rRNA + S-adenosyl-L-homocysteine + H(+). With respect to regulation, rRNA N6-adenosine-methyltransferase activity is inhibited by zinc. Functionally, catalytic subunit of a heterodimer with TRMT112, which specifically methylates the 6th position of adenine in position 1832 of 18S rRNA. N6-methylation of adenine(1832) in 18S rRNA resides in the decoding center of 18S rRNA and is required for translation and embryonic stem cells (ESCs) pluripotency and differentiation. In Mus musculus (Mouse), this protein is rRNA N(6)-adenosine-methyltransferase METTL5.